The following is a 401-amino-acid chain: ATP phosphoribosyltransferase regulatory subunit (401 aa).

This sequence belongs to the class-II aminoacyl-tRNA synthetase family. HisZ subfamily. In terms of assembly, heteromultimer composed of HisG and HisZ subunits.

The protein localises to the cytoplasm. It functions in the pathway amino-acid biosynthesis; L-histidine biosynthesis; L-histidine from 5-phospho-alpha-D-ribose 1-diphosphate: step 1/9. Functionally, required for the first step of histidine biosynthesis. May allow the feedback regulation of ATP phosphoribosyltransferase activity by histidine. The chain is ATP phosphoribosyltransferase regulatory subunit from Desulforamulus reducens (strain ATCC BAA-1160 / DSM 100696 / MI-1) (Desulfotomaculum reducens).